The sequence spans 333 residues: BRISC and BRCA1-A complex member 1 (333 aa).

Met-1 bears the N-acetylmethionine mark. The disordered stretch occupies residues 1–85 (MEVAEANSPT…PWQVPASASE (85 aa)). A Phosphoserine modification is found at Ser-8. Residues 10-24 (TEEEEEEEEEGEETI) show a composition bias toward acidic residues. Ser-33 and Ser-53 each carry phosphoserine. Positions 58–67 (EAATADGGAA) are enriched in low complexity. The VWFA-like stretch occupies residues 99–302 (VIICLDLSEE…LELHNCMAKL (204 aa)).

The protein belongs to the BABAM1 family. Component of the ARISC complex, at least composed of UIMC1/RAP80, ABRAXAS1, BRCC3/BRCC36, BABAM2 and BABAM1/NBA1. Component of the BRCA1-A complex, at least composed of BRCA1, BARD1, UIMC1/RAP80, ABRAXAS1, BRCC3/BRCC36, BABAM2 and BABAM1/NBA1. In the BRCA1-A complex, interacts directly with ABRAXAS1 and BABAM2. Component of the BRISC complex, at least composed of ABRAXAS2, BRCC3/BRCC36, BABAM2 and BABAM1/NBA1. Identified in a complex with SHMT2 and the other subunits of the BRISC complex.

The protein localises to the cytoplasm. Its subcellular location is the nucleus. Its function is as follows. Component of the BRCA1-A complex, a complex that specifically recognizes 'Lys-63'-linked ubiquitinated histones H2A and H2AX at DNA lesions sites, leading to target the BRCA1-BARD1 heterodimer to sites of DNA damage at double-strand breaks (DSBs). The BRCA1-A complex also possesses deubiquitinase activity that specifically removes 'Lys-63'-linked ubiquitin on histones H2A and H2AX. In the BRCA1-A complex, it is required for the complex integrity and its localization at DSBs. Component of the BRISC complex, a multiprotein complex that specifically cleaves 'Lys-63'-linked ubiquitin in various substrates. In these 2 complexes, it is probably required to maintain the stability of BABAM2 and help the 'Lys-63'-linked deubiquitinase activity mediated by BRCC3/BRCC36 component. The BRISC complex is required for normal mitotic spindle assembly and microtubule attachment to kinetochores via its role in deubiquitinating NUMA1. Plays a role in interferon signaling via its role in the deubiquitination of the interferon receptor IFNAR1; deubiquitination increases IFNAR1 activity by enhancing its stability and cell surface expression. Down-regulates the response to bacterial lipopolysaccharide (LPS) via its role in IFNAR1 deubiquitination. The polypeptide is BRISC and BRCA1-A complex member 1 (Babam1) (Mus musculus (Mouse)).